We begin with the raw amino-acid sequence, 240 residues long: Probable septum site-determining protein MinC (240 aa).

Belongs to the MinC family. Interacts with MinD and FtsZ.

In terms of biological role, cell division inhibitor that blocks the formation of polar Z ring septums. Rapidly oscillates between the poles of the cell to destabilize FtsZ filaments that have formed before they mature into polar Z rings. Prevents FtsZ polymerization. The sequence is that of Probable septum site-determining protein MinC from Chromobacterium violaceum (strain ATCC 12472 / DSM 30191 / JCM 1249 / CCUG 213 / NBRC 12614 / NCIMB 9131 / NCTC 9757 / MK).